Reading from the N-terminus, the 186-residue chain is MQQKIIKIKVGSKNPVKINAATKAMAQLFPESIIDASGMDAPSGVAAQPMTDKDTRQGAINRVHYCQQQDQQDTQADYYFAMEGGVDCFDFGPATFAYIAIGHKDQLAIGRSAILPLPMQVYRALEAGEELGHVMDRLFNTVNIKQKGGAIGLLTHGHATRESNYTQAIILAMAPLLNPDIYAQTC.

Glutamine 75 serves as a coordination point for Mg(2+).

Belongs to the YjjX NTPase family. In terms of assembly, homodimer. It depends on Mg(2+) as a cofactor. Requires Mn(2+) as cofactor.

The enzyme catalyses XTP + H2O = XDP + phosphate + H(+). It catalyses the reaction ITP + H2O = IDP + phosphate + H(+). In terms of biological role, phosphatase that hydrolyzes non-canonical purine nucleotides such as XTP and ITP to their respective diphosphate derivatives. Probably excludes non-canonical purines from DNA/RNA precursor pool, thus preventing their incorporation into DNA/RNA and avoiding chromosomal lesions. This is Inosine/xanthosine triphosphatase from Shewanella baltica (strain OS195).